Here is a 432-residue protein sequence, read N- to C-terminus: Interleukin-11 receptor subunit alpha-2 (432 aa).

The N-terminal stretch at 1-23 (MSSSCSGLTRVLVAVATALVSSS) is a signal peptide. At 24 to 372 (SPCPQAWGPP…DPLEQVAVLA (349 aa)) the chain is on the extracellular side. The Ig-like C2-type domain occupies 27 to 110 (PQAWGPPGVQ…SGGMVTLKLG (84 aa)). Intrachain disulfides connect Cys-48–Cys-94, Cys-120–Cys-130, and Cys-170–Cys-180. 2 consecutive Fibronectin type-III domains span residues 112–219 (PPAR…LRPD) and 220–317 (PPQG…TPST). N-linked (GlcNAc...) asparagine glycosylation is present at Asn-127. Positions 151–170 (KTLPGAESQRESPSTGPWPC) are disordered. Asn-194 is a glycosylation site (N-linked (GlcNAc...) asparagine). Positions 304 to 308 (WSAWS) match the WSXWS motif motif. A helical transmembrane segment spans residues 373–393 (SLGIFSCLGLAVGALALGLWL). Residues 394 to 432 (RLRRSGKEGPQKPGLLAPMIPVEKLPGIPNLQRTPENFS) lie on the Cytoplasmic side of the membrane.

The protein belongs to the type I cytokine receptor family. Type 3 subfamily. On ligand binding, forms a multimer complex with IL6ST/gp130. As to expression, expression restricted to testis, lymph node and thymus. Highest level in testis.

Its subcellular location is the membrane. Receptor for interleukin-11. The receptor systems for IL6, LIF, OSM, CNTF, IL11 and CT1 can utilize IL6ST for initiating signal transmission. The IL11/IL11RA/IL6ST complex may be involved in the control of proliferation and/or differentiation of skeletogenic progenitor or other mesenchymal cells. This is Interleukin-11 receptor subunit alpha-2 (Il11ra2) from Mus musculus (Mouse).